The primary structure comprises 425 residues: Serine--tRNA ligase (425 aa).

230–232 (TAE) provides a ligand contact to L-serine. An ATP-binding site is contributed by 261–263 (RSE). Glutamate 284 is a binding site for L-serine. 348-351 (EISS) lines the ATP pocket. Serine 384 lines the L-serine pocket.

Belongs to the class-II aminoacyl-tRNA synthetase family. Type-1 seryl-tRNA synthetase subfamily. Homodimer. The tRNA molecule binds across the dimer.

It is found in the cytoplasm. It carries out the reaction tRNA(Ser) + L-serine + ATP = L-seryl-tRNA(Ser) + AMP + diphosphate + H(+). The enzyme catalyses tRNA(Sec) + L-serine + ATP = L-seryl-tRNA(Sec) + AMP + diphosphate + H(+). Its pathway is aminoacyl-tRNA biosynthesis; selenocysteinyl-tRNA(Sec) biosynthesis; L-seryl-tRNA(Sec) from L-serine and tRNA(Sec): step 1/1. In terms of biological role, catalyzes the attachment of serine to tRNA(Ser). Is also able to aminoacylate tRNA(Sec) with serine, to form the misacylated tRNA L-seryl-tRNA(Sec), which will be further converted into selenocysteinyl-tRNA(Sec). The chain is Serine--tRNA ligase from Streptococcus thermophilus (strain ATCC BAA-491 / LMD-9).